The sequence spans 294 residues: 4-hydroxy-tetrahydrodipicolinate synthase (294 aa).

A pyruvate-binding site is contributed by Thr-48. The active-site Proton donor/acceptor is Tyr-136. Catalysis depends on Lys-164, which acts as the Schiff-base intermediate with substrate. Val-206 contacts pyruvate.

Belongs to the DapA family. Homotetramer; dimer of dimers.

The protein localises to the cytoplasm. It carries out the reaction L-aspartate 4-semialdehyde + pyruvate = (2S,4S)-4-hydroxy-2,3,4,5-tetrahydrodipicolinate + H2O + H(+). Its pathway is amino-acid biosynthesis; L-lysine biosynthesis via DAP pathway; (S)-tetrahydrodipicolinate from L-aspartate: step 3/4. Functionally, catalyzes the condensation of (S)-aspartate-beta-semialdehyde [(S)-ASA] and pyruvate to 4-hydroxy-tetrahydrodipicolinate (HTPA). The chain is 4-hydroxy-tetrahydrodipicolinate synthase from Desulforudis audaxviator (strain MP104C).